Consider the following 484-residue polypeptide: tRNA sulfurtransferase (484 aa).

One can recognise a THUMP domain in the interval 63-167 (REMIERLCCT…DQRLFVVHRQ (105 aa)). ATP is bound by residues 185–186 (LM), Lys267, Gly289, and Gln298. The cysteines at positions 346 and 457 are disulfide-linked. Residues 405–483 (ALAGQIVLDI…GHANVRVYRP (79 aa)) enclose the Rhodanese domain. Cys457 functions as the Cysteine persulfide intermediate in the catalytic mechanism.

The protein belongs to the ThiI family.

It is found in the cytoplasm. The enzyme catalyses [ThiI sulfur-carrier protein]-S-sulfanyl-L-cysteine + a uridine in tRNA + 2 reduced [2Fe-2S]-[ferredoxin] + ATP + H(+) = [ThiI sulfur-carrier protein]-L-cysteine + a 4-thiouridine in tRNA + 2 oxidized [2Fe-2S]-[ferredoxin] + AMP + diphosphate. The catalysed reaction is [ThiS sulfur-carrier protein]-C-terminal Gly-Gly-AMP + S-sulfanyl-L-cysteinyl-[cysteine desulfurase] + AH2 = [ThiS sulfur-carrier protein]-C-terminal-Gly-aminoethanethioate + L-cysteinyl-[cysteine desulfurase] + A + AMP + 2 H(+). It functions in the pathway cofactor biosynthesis; thiamine diphosphate biosynthesis. Its function is as follows. Catalyzes the ATP-dependent transfer of a sulfur to tRNA to produce 4-thiouridine in position 8 of tRNAs, which functions as a near-UV photosensor. Also catalyzes the transfer of sulfur to the sulfur carrier protein ThiS, forming ThiS-thiocarboxylate. This is a step in the synthesis of thiazole, in the thiamine biosynthesis pathway. The sulfur is donated as persulfide by IscS. The chain is tRNA sulfurtransferase from Azotobacter vinelandii (strain DJ / ATCC BAA-1303).